The chain runs to 210 residues: Large ribosomal subunit protein uL4 (210 aa).

Positions 47–64 (SRQGTRSQKSRSEVSGSN) are enriched in polar residues. The segment at 47–83 (SRQGTRSQKSRSEVSGSNKKPWRQKGTGRARSGSVKS) is disordered.

Belongs to the universal ribosomal protein uL4 family. In terms of assembly, part of the 50S ribosomal subunit.

Functionally, one of the primary rRNA binding proteins, this protein initially binds near the 5'-end of the 23S rRNA. It is important during the early stages of 50S assembly. It makes multiple contacts with different domains of the 23S rRNA in the assembled 50S subunit and ribosome. Its function is as follows. Forms part of the polypeptide exit tunnel. In Blochmanniella pennsylvanica (strain BPEN), this protein is Large ribosomal subunit protein uL4.